A 123-amino-acid chain; its full sequence is Small ribosomal subunit protein uS13 (123 aa).

Residues 97–123 form a disordered region; it reads PVRGQRTRSNARTRKGPRPSRIKKKGK. The segment covering 101–123 has biased composition (basic residues); the sequence is QRTRSNARTRKGPRPSRIKKKGK.

This sequence belongs to the universal ribosomal protein uS13 family. Part of the 30S ribosomal subunit. Forms a loose heterodimer with protein S19. Forms two bridges to the 50S subunit in the 70S ribosome.

Located at the top of the head of the 30S subunit, it contacts several helices of the 16S rRNA. In the 70S ribosome it contacts the 23S rRNA (bridge B1a) and protein L5 of the 50S subunit (bridge B1b), connecting the 2 subunits; these bridges are implicated in subunit movement. Contacts the tRNAs in the A and P-sites. This chain is Small ribosomal subunit protein uS13, found in Fervidobacterium nodosum (strain ATCC 35602 / DSM 5306 / Rt17-B1).